Consider the following 328-residue polypeptide: Fructokinase-2 (328 aa).

The protein belongs to the carbohydrate kinase PfkB family.

It catalyses the reaction D-fructose + ATP = D-fructose 6-phosphate + ADP + H(+). It functions in the pathway glycan biosynthesis; starch biosynthesis. May play an important role in maintaining the flux of carbon towards starch formation. The polypeptide is Fructokinase-2 (FRK2) (Solanum lycopersicum (Tomato)).